The primary structure comprises 516 residues: Rho guanine nucleotide exchange factor 9 (516 aa).

Positions 8 to 67 constitute an SH3 domain; that stretch reads DSIVSAEAVWDHVTMANRELAFKAGDVIKVLDASNKDWWWGQIDDEEGWFPASFVRLWVN. Positions 100–110 are interaction with GPHN; it reads RDQMRANVINE. In terms of domain architecture, DH spans 103–287; the sequence is MRANVINEIM…RNVTQQINER (185 aa). One can recognise a PH domain in the interval 318–425; sequence ELIYTGEMAW…WLRAFREERK (108 aa). A disordered region spans residues 450 to 480; that stretch reads RKASKQKGVNSARSVPPSYPPPQDPLNQGQY. Ser-502 carries the post-translational modification Phosphoserine.

In terms of assembly, interacts with GPHN. As to expression, detected in embryonic and adult brain.

Its subcellular location is the cytoplasm. The protein resides in the postsynaptic density. Acts as a guanine nucleotide exchange factor (GEF) for CDC42. Promotes formation of GPHN clusters. This chain is Rho guanine nucleotide exchange factor 9 (Arhgef9), found in Mus musculus (Mouse).